A 109-amino-acid chain; its full sequence is Heterogeneous nuclear ribonucleoprotein-like protein HD40 (109 aa).

A disordered region spans residues 1–36; it reads EEVSNGQEHTEGMXQGEXNXIXVEEHHEGEKNSHLV. Residues 23–36 are compositionally biased toward basic and acidic residues; the sequence is VEEHHEGEKNSHLV. The 11-residue stretch at 40–50 folds into the RRM domain; sequence EEKKLFVGALS. Residues arginine 102 and arginine 105 each carry the asymmetric dimethylarginine modification.

The protein resides in the cytoplasm. It localises to the nucleus. This Artemia salina (Brine shrimp) protein is Heterogeneous nuclear ribonucleoprotein-like protein HD40.